The following is a 124-amino-acid chain: Small ribosomal subunit protein uS12 (124 aa).

Asp-89 bears the 3-methylthioaspartic acid mark.

This sequence belongs to the universal ribosomal protein uS12 family. Part of the 30S ribosomal subunit. Contacts proteins S8 and S17. May interact with IF1 in the 30S initiation complex.

With S4 and S5 plays an important role in translational accuracy. Functionally, interacts with and stabilizes bases of the 16S rRNA that are involved in tRNA selection in the A site and with the mRNA backbone. Located at the interface of the 30S and 50S subunits, it traverses the body of the 30S subunit contacting proteins on the other side and probably holding the rRNA structure together. The combined cluster of proteins S8, S12 and S17 appears to hold together the shoulder and platform of the 30S subunit. This Pectobacterium atrosepticum (strain SCRI 1043 / ATCC BAA-672) (Erwinia carotovora subsp. atroseptica) protein is Small ribosomal subunit protein uS12.